A 905-amino-acid chain; its full sequence is Respiratory burst oxidase homolog protein B (905 aa).

Disordered stretches follow at residues 1-46 and 69-134; these read MADL…KTAR and EVRG…VRKR. Residues 1–355 lie on the Cytoplasmic side of the membrane; that stretch reads MADLEAGMVA…MYFLEENWKR (355 aa). Positions 29–44 are enriched in polar residues; the sequence is IPNSGNLGSSNRSTKT. Positions 75-84 are enriched in gly residues; that stretch reads EGGSGHGTGF. Residues 91–108 show a composition bias toward polar residues; that stretch reads SPSSKSGKLTSKLRQVTN. EF-hand-like stretches follow at residues 172-180 and 206-217; these read QVDGVLLRS and RGIVKQVLTKDE. EF-hand domains lie at 229-264 and 273-308; these read GFDN…SASA and RADE…SPSE. Asp242, Asn244, Asp246, Arg248, and Glu253 together coordinate Ca(2+). The chain crosses the membrane as a helical span at residues 356–376; it reads SWVMTLWISICIALFIWKFIQ. At 377 to 440 the chain is on the extracellular side; that stretch reads YRNRAVFGIM…FNDNINFHKV (64 aa). The Ferric oxidoreductase domain maps to 395 to 551; it reads GAAETLKFNM…HLFVIVYTLL (157 aa). A helical transmembrane segment spans residues 441–461; it reads IAAGVAVGVALHAGAHLTCDF. Residues 462–496 are Cytoplasmic-facing; that stretch reads PRLLHASDAQYELMKPFFGEKRPPNYWWFVKGTEG. The chain crosses the membrane as a helical span at residues 497–517; the sequence is WTGVVMVVLMAIAFTLAQPWF. Residues 518–539 lie on the Extracellular side of the membrane; sequence RRNKLKDSNPLKKMTGFNAFWF. Residues 540–560 form a helical membrane-spanning segment; it reads THHLFVIVYTLLFVHGTCLYL. Topologically, residues 561–568 are cytoplasmic; it reads SRKWYKKT. The chain crosses the membrane as a helical span at residues 569 to 586; that stretch reads TWMYLAVPVVLYVSERIL. In terms of domain architecture, FAD-binding FR-type spans 587–715; it reads RLFRSHDAVG…DGPYGAPAQD (129 aa). Topologically, residues 587–717 are extracellular; the sequence is RLFRSHDAVG…PYGAPAQDYR (131 aa). Residues 718 to 738 traverse the membrane as a helical segment; the sequence is EYDVLLLIGLGIGATPLISIV. Residues 739–905 lie on the Cytoplasmic side of the membrane; sequence KDVLNHIQGE…TRFDFHKENF (167 aa).

It belongs to the RBOH (TC 5.B.1.3) family. As to quaternary structure, monomer and homodimer, stabilized by swapping the EF-hand motifs. Interacts with GTP-bound RAC1.

The protein resides in the membrane. Calcium-dependent NADPH oxidase that generates superoxide. The chain is Respiratory burst oxidase homolog protein B (RBOHB) from Oryza sativa subsp. japonica (Rice).